The following is a 1460-amino-acid chain: Venom prothrombin activator omicarin-C non-catalytic subunit (1460 aa).

An N-terminal signal peptide occupies residues Met-1 to Ala-30. 4 Plastocyanin-like domains span residues Gln-32–Cys-196, Ala-206–Lys-330, Met-351–Cys-529, and Val-539–Ala-685. F5/8 type A domains follow at residues Gln-32–Lys-330 and Ile-350–Ala-685. Ca(2+)-binding residues include Lys-124, Glu-139, Asp-142, and Asp-143. An N-linked (GlcNAc...) asparagine glycan is attached at Asn-156. An intrachain disulfide couples Cys-170 to Cys-196. 5 N-linked (GlcNAc...) asparagine glycosylation sites follow: Asn-242, Asn-300, Asn-385, Asn-406, and Asn-471. The cysteines at positions 251 and 332 are disulfide-linked. Cys-503 and Cys-529 are disulfide-bonded. Asn-557 carries an N-linked (GlcNAc...) asparagine glycan. Cystine bridges form between Cys-672/Cys-1031, Cys-965/Cys-991, Cys-1147/Cys-1298, and Cys-1303/Cys-1457. The b stretch occupies residues Gly-693–Arg-817. A disordered region spans residues Leu-740 to Glu-760. The propeptide at Ser-772–Arg-817 is activation peptide (connecting region). Plastocyanin-like domains follow at residues Asn-823 to Cys-991 and Asn-1000 to Ile-1143. The region spanning Asn-823–Ile-1143 is the F5/8 type A 3 domain. Ca(2+) contacts are provided by Lys-919, Phe-934, Asp-937, and Asp-938. N-linked (GlcNAc...) asparagine glycosylation is present at Asn-943. Residues Asn-1000, Asn-1180, and Asn-1397 are each glycosylated (N-linked (GlcNAc...) asparagine). 2 F5/8 type C domains span residues Cys-1147–Cys-1298 and Cys-1303–Cys-1457.

This sequence belongs to the multicopper oxidase family. As to quaternary structure, heterodimer of a light and a heavy chains; non-disulfide-linked. The interaction between the two chains is calcium-dependent. Found in its active form associated with omicarin-C catalytic subunit (AC Q58L95). In physiological conditions, blood coagulation factor V and factor Va are inactivated by activated protein C (APC) through proteolytic degradation of the heavy chain. However, omicarin-C non-catalytic subunit (factor V-like protein) retains its full activity even at high concentration of APC. This has two explanations: this protein has only one of the three cleavage sites present in factor V that are targeted by the APC for inactivation, and the binding with the catalytic subunit protect the cleavage site from inactivation. In terms of tissue distribution, expressed by the venom gland.

The protein localises to the secreted. Snake prothrombin activator that attacks the hemostatic system of prey. This non-catalytic subunit is functionally similar to blood coagulation factor V. It serves as a critical cofactor for the prothrombinase activity of the catalytic subunit, which is similar to the blood coagulation factor X. The complex converts prothrombin to thrombin by sequential cleavage at two positions, Arg-320 followed by Arg-271. Cleavage at Arg-320 produces an active intermediate known as meizothrombin. Meizothrombin is the 'second' substrate for prothrombinase, and it docks in an altered manner to present the second cleavage site (271). Cleavage at Arg-271 releases active thrombin from its pro-fragment. This order of events is reversed if the protease component of prothrombinase is used on its own, suggesting that the 271 site is inherently more accessible to proteolysis. In Oxyuranus microlepidotus (Inland taipan), this protein is Venom prothrombin activator omicarin-C non-catalytic subunit.